The following is a 673-amino-acid chain: DNA ligase (673 aa).

NAD(+) contacts are provided by residues 34–38 (DAEYD), 83–84 (SL), and Glu-116. Residue Lys-118 is the N6-AMP-lysine intermediate of the active site. Residues Arg-139, Glu-176, Lys-293, and Lys-317 each contribute to the NAD(+) site. Zn(2+)-binding residues include Cys-411, Cys-414, Cys-429, and Cys-435. One can recognise a BRCT domain in the interval 595–673 (NQQNPFFGKT…EDEFLKWVNS (79 aa)).

The protein belongs to the NAD-dependent DNA ligase family. LigA subfamily. The cofactor is Mg(2+). Requires Mn(2+) as cofactor.

The catalysed reaction is NAD(+) + (deoxyribonucleotide)n-3'-hydroxyl + 5'-phospho-(deoxyribonucleotide)m = (deoxyribonucleotide)n+m + AMP + beta-nicotinamide D-nucleotide.. Its function is as follows. DNA ligase that catalyzes the formation of phosphodiester linkages between 5'-phosphoryl and 3'-hydroxyl groups in double-stranded DNA using NAD as a coenzyme and as the energy source for the reaction. It is essential for DNA replication and repair of damaged DNA. This is DNA ligase from Legionella pneumophila (strain Corby).